The sequence spans 81 residues: U17-lycotoxin-Ls1a (81 aa).

The signal sequence occupies residues 1 to 22; it reads MSSKVQAVLLLVGVITFLAVHA. The propeptide occupies 23–34; sequence QEELSENTESER. Disulfide bonds link Cys-36-Cys-51, Cys-50-Cys-67, and Cys-58-Cys-65.

The protein belongs to the neurotoxin 02 (plectoxin) family. As to expression, expressed by the venom gland.

The protein localises to the secreted. The sequence is that of U17-lycotoxin-Ls1a from Lycosa singoriensis (Wolf spider).